The sequence spans 688 residues: Sodium channel and clathrin linker 1 (688 aa).

Ala-2 is modified (N-acetylalanine). A coiled-coil region spans residues 59 to 673 (LIAEYEKHLE…SASQQLSVIT (615 aa)). Ser-681 bears the Phosphoserine mark.

In terms of assembly, interacts with SCN10A and clathrin. Identified in a complex containing SCN10A, clathrin and SCLT1. Detected in small neurons in dorsal root ganglia. Detected in C-type fibers of sciatic nerve (at protein level).

The protein resides in the cytoplasm. The protein localises to the cytoskeleton. It is found in the microtubule organizing center. Its subcellular location is the centrosome. It localises to the centriole. Functionally, adapter protein that links SCN10A to clathrin. Regulates SCN10A channel activity, possibly by promoting channel internalization. This Rattus norvegicus (Rat) protein is Sodium channel and clathrin linker 1 (Sclt1).